The following is a 342-amino-acid chain: Phosphoribosylformylglycinamidine cyclo-ligase (342 aa).

Belongs to the AIR synthase family.

It localises to the cytoplasm. The enzyme catalyses 2-formamido-N(1)-(5-O-phospho-beta-D-ribosyl)acetamidine + ATP = 5-amino-1-(5-phospho-beta-D-ribosyl)imidazole + ADP + phosphate + H(+). Its pathway is purine metabolism; IMP biosynthesis via de novo pathway; 5-amino-1-(5-phospho-D-ribosyl)imidazole from N(2)-formyl-N(1)-(5-phospho-D-ribosyl)glycinamide: step 2/2. The sequence is that of Phosphoribosylformylglycinamidine cyclo-ligase from Latilactobacillus sakei subsp. sakei (strain 23K) (Lactobacillus sakei subsp. sakei).